Here is a 1196-residue protein sequence, read N- to C-terminus: Sorbin and SH3 domain-containing protein 2 (1196 aa).

2 disordered regions span residues 25-57 and 75-95; these read VQSS…ETLN and PNLQ…GNSG. A phosphoserine mark is found at S27, S28, and S40. Polar residues predominate over residues 83–92; it reads PTQSHITING. S130 and S143 each carry phosphoserine. M148 carries the post-translational modification Alanine amide. The 62-residue stretch at 166-227 folds into the SoHo domain; sequence VIKAPHYPGI…YNTPYTYNAG (62 aa). Polar residues predominate over residues 235–247; that stretch reads AQSHPAAKTQTYR. Disordered stretches follow at residues 235–314 and 329–407; these read AQSH…EPGK and SSID…GDDS. Composition is skewed to basic and acidic residues over residues 252 to 262 and 276 to 312; these read SHSDNGTDAFK and RPRD…EYEP. Phosphoserine is present on S254. A compositionally biased stretch (polar residues) spans 329-343; it reads SSIDRSLERPSSSAS. Residues S334, S340, S343, and S354 each carry the phosphoserine modification. Phosphothreonine is present on T372. S382 carries the post-translational modification Phosphoserine. Residues 382–399 are compositionally biased toward low complexity; sequence SSSTFTTSFISSSPSSPS. T387 is subject to Phosphothreonine. Phosphoserine occurs at positions 392, 393, 394, 396, 397, 399, 478, 589, 592, 645, 648, 844, and 938. Residues 929 to 958 are disordered; it reads QDHESPRSYSSTLTDLGRSVSRERRGTPEK. A compositionally biased stretch (basic and acidic residues) spans 948–958; sequence VSRERRGTPEK. 2 consecutive SH3 domains span residues 959-1018 and 1034-1095; these read EVKL…KLTP and GEIG…VVKR. S1113 and S1119 each carry phosphoserine. An SH3 3 domain is found at 1137–1196; it reads GGGEPFQALYNYTPRNEDELELRESDVVDVMEKCDDGWFVGTSRRTKFFGTFPGNYVKRL.

In terms of assembly, interacts with ABL1/c-Abl, ABL2/v-Abl/Arg, ACTN, CBL and PALLD. Interacts with ABL, CBL, DNM1, DNM2, FLOT1, AFDN, PTK2B/PYK2, SAPAP, SPTAN1, SYNJ1, SYNJ2, VCL/vinculin and WASF. Interacts with PTPN12 and WASF1 via its SH3 domains; this interaction may mediate the partial PTPN12 and WASF1 translocation to focal adhesion sites. In terms of processing, ubiquitinated by CBL. Expressed in brain; found in synapses in cerebellum.

It is found in the cytoplasm. The protein resides in the perinuclear region. The protein localises to the apical cell membrane. Its subcellular location is the cell junction. It localises to the focal adhesion. It is found in the cell projection. The protein resides in the lamellipodium. Functionally, adapter protein that plays a role in the assembling of signaling complexes, being a link between ABL kinases and actin cytoskeleton. Can form complex with ABL1 and CBL, thus promoting ubiquitination and degradation of ABL1. May play a role in the regulation of pancreatic cell adhesion, possibly by acting on WASF1 phosphorylation, enhancing phosphorylation by ABL1, as well as dephosphorylation by PTPN12. Isoform 2 increases water and sodium absorption in the intestine and gall-bladder. In Rattus norvegicus (Rat), this protein is Sorbin and SH3 domain-containing protein 2 (Sorbs2).